The chain runs to 174 residues: Gamma-crystallin C (174 aa).

Beta/gamma crystallin 'Greek key' domains follow at residues 2 to 40 (GKITFYEDRGFQGRHYECSSDCPNLQPYFSRCNSIRVDS) and 41 to 83 (GCWM…CLIP). Cysteine 23 carries the post-translational modification S-methylcysteine. The segment at 84–87 (QTSS) is connecting peptide. 2 Beta/gamma crystallin 'Greek key' domains span residues 88–128 (HRLR…HVLE) and 129–171 (GCWV…RRVV).

Belongs to the beta/gamma-crystallin family. Monomer.

Crystallins are the dominant structural components of the vertebrate eye lens. This chain is Gamma-crystallin C (CRYGC), found in Canis lupus familiaris (Dog).